Consider the following 125-residue polypeptide: Kappa-casein (125 aa).

The segment at 42–63 is disordered; that stretch reads LPNIDPPTVERRPRPRPSFIAI. T97 carries O-linked (GalNAc...) threonine glycosylation. Phosphoserine; alternate is present on S104. S104 carries O-linked (GalNAc...) serine; alternate glycosylation. An O-linked (GalNAc...) threonine glycan is attached at T121. At S122 the chain carries Phosphoserine.

The protein belongs to the kappa-casein family. In terms of tissue distribution, mammary gland specific. Secreted in milk.

Its subcellular location is the secreted. Its function is as follows. Kappa-casein stabilizes micelle formation, preventing casein precipitation in milk. The polypeptide is Kappa-casein (CSN3) (Lama guanicoe (Guanaco)).